Consider the following 228-residue polypeptide: FtsZ-localized protein A (228 aa).

The 83-residue stretch at 3–85 (VERTLHHFPL…HIEETETEPP (83 aa)) folds into the GST N-terminal domain. A GST C-terminal domain is found at 90–223 (DPAERAEARR…WPGLAPAAHY (134 aa)).

This sequence belongs to the GST superfamily. Homodimer. Interacts with FtsZ filaments. Probably interacts with the GTPase domain of FtsZ.

The protein localises to the cytoplasm. Functionally, essential cell division protein that must bind to FtsZ for division to occur. Critical coordinator of envelope constriction through its interaction with FtsZ. Promotes the formation of highly curved FtsZ filaments, reduces the GTPase activity of FtsZ and stabilizes FtsZ polymers. May regulate FtsZ function by modulating its superstructure. Does not bind to glutathione. In Caulobacter vibrioides (strain NA1000 / CB15N) (Caulobacter crescentus), this protein is FtsZ-localized protein A.